The primary structure comprises 185 residues: Ribosome-recycling factor (185 aa).

This sequence belongs to the RRF family.

It localises to the cytoplasm. Responsible for the release of ribosomes from messenger RNA at the termination of protein biosynthesis. May increase the efficiency of translation by recycling ribosomes from one round of translation to another. The sequence is that of Ribosome-recycling factor from Bacillus anthracis (strain A0248).